The sequence spans 364 residues: Putative agmatine deiminase 1 (364 aa).

Cys356 acts as the Amidino-cysteine intermediate in catalysis.

It belongs to the agmatine deiminase family.

The catalysed reaction is agmatine + H2O = N-carbamoylputrescine + NH4(+). This chain is Putative agmatine deiminase 1, found in Listeria monocytogenes serotype 4b (strain F2365).